The sequence spans 308 residues: tRNA uridine(34) hydroxylase (308 aa).

The 95-residue stretch at 128-222 (ADENTVVVDT…YLEEVPREQS (95 aa)) folds into the Rhodanese domain. The Cysteine persulfide intermediate role is filled by cysteine 182.

Belongs to the TrhO family.

The enzyme catalyses uridine(34) in tRNA + AH2 + O2 = 5-hydroxyuridine(34) in tRNA + A + H2O. In terms of biological role, catalyzes oxygen-dependent 5-hydroxyuridine (ho5U) modification at position 34 in tRNAs. The chain is tRNA uridine(34) hydroxylase from Brucella suis biovar 1 (strain 1330).